Consider the following 552-residue polypeptide: Glutamine--tRNA ligase (552 aa).

The 'HIGH' region motif lies at 34 to 44 (PEPNGYLHIGH). ATP is bound by residues 35-37 (EPN) and 41-47 (HIGHAKS). 2 residues coordinate L-glutamine: Asp-67 and Tyr-212. ATP is bound by residues Thr-231, 261–262 (RL), and 269–271 (MSK). A 'KMSKS' region motif is present at residues 268 to 272 (LMSKR).

This sequence belongs to the class-I aminoacyl-tRNA synthetase family. As to quaternary structure, monomer.

It is found in the cytoplasm. The enzyme catalyses tRNA(Gln) + L-glutamine + ATP = L-glutaminyl-tRNA(Gln) + AMP + diphosphate. The chain is Glutamine--tRNA ligase from Hamiltonella defensa subsp. Acyrthosiphon pisum (strain 5AT).